We begin with the raw amino-acid sequence, 348 residues long: Protein RecA (348 aa).

64–71 (GPESSGKT) contributes to the ATP binding site.

It belongs to the RecA family. In terms of assembly, monomer; forms higher-order oligomers. Interacts with RecU. Interacts with DprA (smf). Interacts with RecD2.

Its subcellular location is the cytoplasm. The protein localises to the nucleoid. Its function is as follows. Multifunctional protein involved in homologous recombination, DNA repair and competence. Can catalyze the hydrolysis of (d)ATP in the presence of single-stranded (ss)DNA; prefers dATP at least in vitro, catalyzes the dATP-dependent uptake of ssDNA by duplex DNA, and the dATP-dependent hybridization of homologous ssDNA (strand exchange). RecA-ATP cannot catalyze homologous DNA strand exchange; SsbA and DprA activate strand exchange by RecA-ATP. It interacts with LexA causing its activation and leading to its autocatalytic cleavage. Hydrolysis of ATP in the presence of ssDNA is partially inhibited by RecU. Required for DNA transformation; protects transforming DNA from degradation, possibly in combination with DprA. Blocks replication of both leading and lagging strand DNA in the presence of RecO and SsbA; RecD2 is able to overcome this blockage. Functionally, recruited to repair centers (RCs), foci that are the site of double-stranded DNA break(s), after RecN. Concomitant with the appearance of RecO at the RCs, RecA forms threads that extend from RCs toward the opposite cell half, possibly searching for sequence homology along the sister chromosome. The threads disappear after about 2 hours. Thread formation is absolutely dependent on RecJ or AadAB. Thread formation is also dependent on RarA. This is Protein RecA from Bacillus subtilis (strain 168).